A 249-amino-acid polypeptide reads, in one-letter code: Acetylglutamate kinase (249 aa).

Substrate contacts are provided by residues 38–39 (GG), Arg-60, and Asn-147.

The protein belongs to the acetylglutamate kinase family. ArgB subfamily.

It localises to the cytoplasm. The catalysed reaction is N-acetyl-L-glutamate + ATP = N-acetyl-L-glutamyl 5-phosphate + ADP. Its pathway is amino-acid biosynthesis; L-arginine biosynthesis; N(2)-acetyl-L-ornithine from L-glutamate: step 2/4. Catalyzes the ATP-dependent phosphorylation of N-acetyl-L-glutamate. In Deinococcus radiodurans (strain ATCC 13939 / DSM 20539 / JCM 16871 / CCUG 27074 / LMG 4051 / NBRC 15346 / NCIMB 9279 / VKM B-1422 / R1), this protein is Acetylglutamate kinase.